The sequence spans 294 residues: Flavin-dependent thymidylate synthase (294 aa).

Positions 27–250 (GFIRVIDYMG…PFTYEAFEEY (224 aa)) constitute a ThyX domain. FAD-binding positions include Thr-73, 96 to 98 (RHR), and Glu-104. DUMP is bound by residues 93–96 (QWIR), 104–108 (EYSAR), and Arg-189. A ThyX motif motif is present at residues 96 to 106 (RHRTASVNEYS). Residues 205 to 207 (NLH) and His-211 each bind FAD. A dUMP-binding site is contributed by Arg-216. Arg-216 acts as the Involved in ionization of N3 of dUMP, leading to its activation in catalysis.

The protein belongs to the thymidylate synthase ThyX family. Homotetramer. The cofactor is FAD.

The enzyme catalyses dUMP + (6R)-5,10-methylene-5,6,7,8-tetrahydrofolate + NADPH + H(+) = dTMP + (6S)-5,6,7,8-tetrahydrofolate + NADP(+). The protein operates within pyrimidine metabolism; dTTP biosynthesis. Functionally, catalyzes the reductive methylation of 2'-deoxyuridine-5'-monophosphate (dUMP) to 2'-deoxythymidine-5'-monophosphate (dTMP) while utilizing 5,10-methylenetetrahydrofolate (mTHF) as the methyl donor, and NADPH and FADH(2) as the reductant. This is Flavin-dependent thymidylate synthase from Rickettsia prowazekii (strain Madrid E).